A 663-amino-acid chain; its full sequence is RING finger protein 145 (663 aa).

The next 14 membrane-spanning stretches (helical) occupy residues 53-73 (YLAL…LTLP), 77-97 (LVQL…HQIS), 123-143 (FTTA…VMKT), 146-166 (IWLF…VPLE), 168-188 (IVII…YFLG), 205-222 (LVQV…MSLW), 225-245 (LVVP…QIYS), 275-295 (YSLL…LTLC), 316-336 (TEGV…LQVV), 340-360 (FLLS…MLEI), 384-404 (SLCL…CQFF), 410-430 (LLII…TLFI), 460-480 (LLEF…TIFG), and 482-502 (WTVM…WLRA). The YLYF motif signature appears at 81 to 84 (YLYF). Residue C537 is part of the active site. The segment at 537-575 (CAICYQDMKSAVITPCSHFFHAGCLKKWLYVQETCPLCH) adopts an RING-type; atypical zinc-finger fold. Residues 607-663 (EGTEPPGQEHTPGTRIQEGSRDNNEYIARRPDNQEGAFDPKEYPHSAKDEAHPVESA) form a disordered region. Over residues 624–663 (EGSRDNNEYIARRPDNQEGAFDPKEYPHSAKDEAHPVESA) the composition is skewed to basic and acidic residues.

Interacts (via YLYF motif) with INSIG1 and INSIG2.

The protein localises to the endoplasmic reticulum membrane. It carries out the reaction S-ubiquitinyl-[E2 ubiquitin-conjugating enzyme]-L-cysteine + [acceptor protein]-L-lysine = [E2 ubiquitin-conjugating enzyme]-L-cysteine + N(6)-ubiquitinyl-[acceptor protein]-L-lysine.. Functionally, E3 ubiquitin ligase that catalyzes the direct transfer of ubiquitin from E2 ubiquitin-conjugating enzyme to a specific substrate. In response to bacterial infection, negatively regulates the phagocyte oxidative burst by controlling the turnover of the NADPH oxidase complex subunits. Promotes monoubiquitination of CYBA and 'Lys-48'-linked polyubiquitination and degradation of CYBB NADPH oxidase catalytic subunits, both essential for the generation of antimicrobial reactive oxygen species. Involved in the maintenance of cholesterol homeostasis. In response to high sterol concentrations ubiquitinates HMGCR, a rate-limiting enzyme in cholesterol biosynthesis, and targets it for degradation. The interaction with INSIG1 is required for this function. In addition, triggers ubiquitination of SCAP, likely inhibiting its transport to the Golgi apparatus and the subsequent processing/maturation of SREBPF2, ultimately down-regulating cholesterol biosynthesis. The chain is RING finger protein 145 from Homo sapiens (Human).